Here is an 884-residue protein sequence, read N- to C-terminus: Nonsense-mediated mRNA decay factor EBS1 (884 aa).

Disordered regions lie at residues 596-645 (NSMK…PTMG) and 755-774 (QGGLYSSQQPSSMSSLNSAY). The segment covering 633-645 (RSSSLDSFSPTMG) has biased composition (polar residues). A compositionally biased stretch (low complexity) spans 760-772 (SSQQPSSMSSLNS).

It belongs to the EST1 family. In terms of assembly, interacts with NMD helicase UPF1. Interacts with CDC33.

It localises to the nucleus. It is found in the chromosome. Its subcellular location is the telomere. The protein resides in the cytoplasm. The protein localises to the P-body. Plays a role in nonsense-mediated mRNA decay (NMD). Recruits UPF1 to cytoplasmic mRNA decay bodies (P-bodies). Negative regulator of gene expression. Inhibits translation most likely through effects on eIF-4E (CDC33). Involved in telomere maintenance. The chain is Nonsense-mediated mRNA decay factor EBS1 from Saccharomyces cerevisiae (strain ATCC 204508 / S288c) (Baker's yeast).